The following is a 329-amino-acid chain: Beta-ketoacyl-[acyl-carrier-protein] synthase III (329 aa).

Residues cysteine 123 and histidine 256 contribute to the active site. Residues 257–261 form an ACP-binding region; that stretch reads QANIR. Residue asparagine 286 is part of the active site.

The protein belongs to the thiolase-like superfamily. FabH family. In terms of assembly, homodimer.

It localises to the cytoplasm. The catalysed reaction is malonyl-[ACP] + acetyl-CoA + H(+) = 3-oxobutanoyl-[ACP] + CO2 + CoA. It functions in the pathway lipid metabolism; fatty acid biosynthesis. Its function is as follows. Catalyzes the condensation reaction of fatty acid synthesis by the addition to an acyl acceptor of two carbons from malonyl-ACP. Catalyzes the first condensation reaction which initiates fatty acid synthesis and may therefore play a role in governing the total rate of fatty acid production. Possesses both acetoacetyl-ACP synthase and acetyl transacylase activities. Its substrate specificity determines the biosynthesis of branched-chain and/or straight-chain of fatty acids. The protein is Beta-ketoacyl-[acyl-carrier-protein] synthase III of Burkholderia cenocepacia (strain HI2424).